A 206-amino-acid chain; its full sequence is Small ribosomal subunit protein uS4 (206 aa).

The 61-residue stretch at C96 to A156 folds into the S4 RNA-binding domain.

Belongs to the universal ribosomal protein uS4 family. Part of the 30S ribosomal subunit. Contacts protein S5. The interaction surface between S4 and S5 is involved in control of translational fidelity.

In terms of biological role, one of the primary rRNA binding proteins, it binds directly to 16S rRNA where it nucleates assembly of the body of the 30S subunit. Its function is as follows. With S5 and S12 plays an important role in translational accuracy. In Pseudomonas aeruginosa (strain LESB58), this protein is Small ribosomal subunit protein uS4.